An 812-amino-acid polypeptide reads, in one-letter code: Probable inorganic carbon transporter subunit DabA (812 aa).

The Zn(2+) site is built by cysteine 337, aspartate 339, histidine 499, and cysteine 514.

The protein belongs to the inorganic carbon transporter (TC 9.A.2) DabA family. In terms of assembly, forms a complex with DabB. The cofactor is Zn(2+).

The protein resides in the cell inner membrane. In terms of biological role, part of an energy-coupled inorganic carbon pump. In Xanthomonas euvesicatoria pv. vesicatoria (strain 85-10) (Xanthomonas campestris pv. vesicatoria), this protein is Probable inorganic carbon transporter subunit DabA.